The primary structure comprises 60 residues: MKNTILILFTAFIALLGFFGMSAEALADPVADPLAGPNAEADPEAINWKGIAAMAKKLLG.

The first 27 residues, 1–27 (MKNTILILFTAFIALLGFFGMSAEALA), serve as a signal peptide directing secretion. AXPX repeat units lie at residues 27–30 (ADPV), 31–34 (ADPL), 35–38 (AGPN), and 41–44 (ADPE). Residues 28 to 45 (DPVADPLAGPNAEADPEA) constitute a propeptide that is removed on maturation. The residue at position 59 (L59) is a Leucine amide.

Belongs to the MCD family. Mastoparan subfamily. Expressed by the venom gland.

It is found in the secreted. The protein resides in the target cell membrane. In terms of biological role, antimicrobial and mast cell degranulating peptide. Has broad spectrum antibacterial activity against both Gram-positive and Gram-negative bacteria (S.aureus MIC=32-64 ug/ml, S.xylosus MIC=3 ug/ml, S.alactolyticus MIC=16 ug/ml, C.koseri MIC=4 ug/ml, E.coli MIC=8 ug/ml, K.pneumoniae MIC=64 ug/ml, P.aerugiosa MIC=256 ug/ml, S.choleraesuis MIC=32 ug/ml, S.typhimurium MIC=32 ug/ml, V.parahamelytics MIC=32 ug/ml). Affects membrane permeability of E.coli. Shows hemolytic activities on sheep, chicken and human erythrocytes. Its mast cell degranulation activity may be related to the activation of G-protein coupled receptors in mast cells as well as interaction with other proteins located in cell endosomal membranes in the mast cells. This chain is Mastoparan-V, found in Vespa velutina flavitarsus (Asian hornet).